Consider the following 169-residue polypeptide: S-ribosylhomocysteine lyase (169 aa).

Fe cation-binding residues include His-54, His-58, and Cys-129.

The protein belongs to the LuxS family. As to quaternary structure, homodimer. The cofactor is Fe cation.

It catalyses the reaction S-(5-deoxy-D-ribos-5-yl)-L-homocysteine = (S)-4,5-dihydroxypentane-2,3-dione + L-homocysteine. Functionally, involved in the synthesis of autoinducer 2 (AI-2) which is secreted by bacteria and is used to communicate both the cell density and the metabolic potential of the environment. The regulation of gene expression in response to changes in cell density is called quorum sensing. Catalyzes the transformation of S-ribosylhomocysteine (RHC) to homocysteine (HC) and 4,5-dihydroxy-2,3-pentadione (DPD). The polypeptide is S-ribosylhomocysteine lyase (Actinobacillus pleuropneumoniae serotype 5b (strain L20)).